The sequence spans 424 residues: Tyrosine--tRNA ligase (424 aa).

Y37 is an L-tyrosine binding site. Residues 42–51 (PTADSLHLGH) carry the 'HIGH' region motif. K144 is subject to N6-acetyllysine. Residues Y175 and Q179 each contribute to the L-tyrosine site. The short motif at 235–239 (KFGKT) is the 'KMSKS' region element. K238 lines the ATP pocket. One can recognise an S4 RNA-binding domain in the interval 357 to 414 (ADLMQALVDSELQPSRGQARKTIASNAITINGEKQSDPEYFFKEEDRLFGRFTLLRRG).

This sequence belongs to the class-I aminoacyl-tRNA synthetase family. TyrS type 1 subfamily. In terms of assembly, homodimer.

It localises to the cytoplasm. It carries out the reaction tRNA(Tyr) + L-tyrosine + ATP = L-tyrosyl-tRNA(Tyr) + AMP + diphosphate + H(+). Functionally, catalyzes the attachment of tyrosine to tRNA(Tyr) in a two-step reaction: tyrosine is first activated by ATP to form Tyr-AMP and then transferred to the acceptor end of tRNA(Tyr). This is Tyrosine--tRNA ligase from Shigella dysenteriae serotype 1 (strain Sd197).